The chain runs to 164 residues: Thiol peroxidase (164 aa).

Positions 18–164 (KKVGDSAPDF…YEAVLSHLNK (147 aa)) constitute a Thioredoxin domain. Cys-60 (cysteine sulfenic acid (-SOH) intermediate) is an active-site residue. A disulfide bridge connects residues Cys-60 and Cys-94.

It belongs to the peroxiredoxin family. Tpx subfamily. Homodimer.

It carries out the reaction a hydroperoxide + [thioredoxin]-dithiol = an alcohol + [thioredoxin]-disulfide + H2O. Functionally, thiol-specific peroxidase that catalyzes the reduction of hydrogen peroxide and organic hydroperoxides to water and alcohols, respectively. Plays a role in cell protection against oxidative stress by detoxifying peroxides. The sequence is that of Thiol peroxidase from Oceanobacillus iheyensis (strain DSM 14371 / CIP 107618 / JCM 11309 / KCTC 3954 / HTE831).